Reading from the N-terminus, the 204-residue chain is Proteasome subunit beta type-3-B (204 aa).

Belongs to the peptidase T1B family. In terms of assembly, component of the 20S core complex of the 26S proteasome. The 26S proteasome is composed of a core protease (CP), known as the 20S proteasome, capped at one or both ends by the 19S regulatory particle (RP/PA700). The 20S proteasome core is composed of 28 subunits that are arranged in four stacked rings, resulting in a barrel-shaped structure. The two end rings are each formed by seven alpha subunits, and the two central rings are each formed by seven beta subunits. The catalytic chamber with the active sites is on the inside of the barrel.

It is found in the cytoplasm. It localises to the nucleus. Non-catalytic component of the proteasome, a multicatalytic proteinase complex which is characterized by its ability to cleave peptides with Arg, Phe, Tyr, Leu, and Glu adjacent to the leaving group at neutral or slightly basic pH. The proteasome has an ATP-dependent proteolytic activity. This chain is Proteasome subunit beta type-3-B (PBC2), found in Arabidopsis thaliana (Mouse-ear cress).